The following is a 104-amino-acid chain: Naphthalene 1,2-dioxygenase system, ferredoxin component (104 aa).

One can recognise a Rieske domain in the interval isoleucine 6–isoleucine 101. [2Fe-2S] cluster-binding residues include cysteine 45, histidine 47, cysteine 64, and histidine 67.

This sequence belongs to the bacterial ring-hydroxylating dioxygenase ferredoxin component family. The naphthalene dioxygenase (NDO) multicomponent enzyme system is composed of an electron transfer component and a dioxygenase component (iron sulfur protein (ISP)). The electron transfer component is composed of a ferredoxin reductase (NdoR) and a ferredoxin (NdoA), and the dioxygenase component is formed of a heterohexamer (trimer of heterodimers) of three large alpha subunits (NdoB) and three small beta subunits (NdoC). Requires [2Fe-2S] cluster as cofactor.

The protein operates within aromatic compound metabolism; naphthalene degradation. Its function is as follows. Component of the naphthalene dioxygenase (NDO) multicomponent enzyme system which catalyzes the incorporation of both atoms of molecular oxygen into naphthalene to form cis-(1R,2S)-dihydroxy-1,2-dihydronaphthalene. Functions as an intermediate electron transfer protein via a specific interaction with iron sulfur protein components (ISP) (NdoB and NdoC). The sequence is that of Naphthalene 1,2-dioxygenase system, ferredoxin component from Pseudomonas aeruginosa.